The sequence spans 602 residues: Aspartate--tRNA(Asp/Asn) ligase (602 aa).

Glutamate 176 lines the L-aspartate pocket. The aspartate stretch occupies residues 200–203 (QQFK). Positions 222 and 452 each coordinate L-aspartate. 222-224 (RDE) serves as a coordination point for ATP. Glutamate 490 contacts ATP. Arginine 497 contacts L-aspartate. 542–545 (GIDR) is an ATP binding site.

Belongs to the class-II aminoacyl-tRNA synthetase family. Type 1 subfamily. As to quaternary structure, homodimer.

The protein localises to the cytoplasm. It catalyses the reaction tRNA(Asx) + L-aspartate + ATP = L-aspartyl-tRNA(Asx) + AMP + diphosphate. Aspartyl-tRNA synthetase with relaxed tRNA specificity since it is able to aspartylate not only its cognate tRNA(Asp) but also tRNA(Asn). Reaction proceeds in two steps: L-aspartate is first activated by ATP to form Asp-AMP and then transferred to the acceptor end of tRNA(Asp/Asn). The chain is Aspartate--tRNA(Asp/Asn) ligase from Rickettsia akari (strain Hartford).